The primary structure comprises 1166 residues: Tectonin beta-propeller repeat-containing protein 1 (1166 aa).

4 TECPR repeats span residues 209-240 (LSVW…SLVE), 254-285 (DLIW…SMVE), 301-332 (SVVW…IEMV), and 344-376 (DQVW…KAIV). Residues S386, S388, S391, S413, and S418 each carry the phosphoserine modification. A disordered region spans residues 404–496 (RGSGTESAPS…PAELPWTNID (93 aa)). Residues 407 to 416 (GTESAPSDTD) show a composition bias toward polar residues. The span at 451–462 (TSGNTDHSTENA) shows a compositional bias: polar residues. Residues 466 to 481 (EGKEKAPETSRSDECR) show a composition bias toward basic and acidic residues. The PH domain occupies 616–722 (KTGALQWWCD…WLALLSLSCC (107 aa)). One copy of the TECPR 5 repeat lies at 734 to 761 (QAIWSVTCKGDIFVSEPSPDLEARERLL). Residue S943 is modified to Phosphoserine. TECPR repeat units lie at residues 958–989 (VALW…LHVG), 1003–1034 (YQVW…YHIP), 1049–1080 (TSVY…EHVS), and 1092–1132 (DQVW…DYGI).

It belongs to the TECPR1 family. In terms of assembly, interacts with ATG5; the interaction is direct. Interacts with WIPI2. Interacts with the ATG5-ATG12 conjugate, the interaction is however mutually exclusive with ATG16, since it does not interact with ATG12-ATG5-ATG16 complex.

Its subcellular location is the cytoplasmic vesicle. It localises to the autophagosome membrane. The protein localises to the lysosome membrane. Tethering factor involved in autophagy. Involved in autophagosome maturation by promoting the autophagosome fusion with lysosomes: acts by associating with both the ATG5-ATG12 conjugate and phosphatidylinositol-3-phosphate (PtdIns(3)P) present at the surface of autophagosomes. Also involved in selective autophagy against bacterial pathogens, by being required for phagophore/preautophagosomal structure biogenesis and maturation. This is Tectonin beta-propeller repeat-containing protein 1 (Tecpr1) from Mus musculus (Mouse).